The primary structure comprises 71 residues: Small ribosomal subunit protein bS21 (71 aa).

This sequence belongs to the bacterial ribosomal protein bS21 family.

The polypeptide is Small ribosomal subunit protein bS21 (Shewanella woodyi (strain ATCC 51908 / MS32)).